Consider the following 130-residue polypeptide: Fumarate reductase subunit D (130 aa).

Transmembrane regions (helical) follow at residues 35–55 (FAMITPITVLVLGILAPLGVI), 67–87 (SFATSIIGALFIIGTLALPMW), and 110–130 (IACYGFATIISALAVVFIFMI).

The protein belongs to the FrdD family. Part of an enzyme complex containing four subunits: a flavoprotein (FrdA), an iron-sulfur protein (FrdB), and two hydrophobic anchor proteins (FrdC and FrdD).

The protein resides in the cell inner membrane. Anchors the catalytic components of the fumarate reductase complex to the cell membrane, binds quinones. The protein is Fumarate reductase subunit D of Vibrio cholerae serotype O1 (strain M66-2).